A 302-amino-acid chain; its full sequence is Pentatricopeptide repeat-containing protein At4g38150 (302 aa).

Over residues 26 to 40 (SATRFLSTGDNGQVD) the composition is skewed to polar residues. Disordered stretches follow at residues 26-82 (SATR…TTLS) and 94-116 (VNQDSRETPKPEQYPQEPLPPPE). Basic and acidic residues predominate over residues 54–67 (LRGERSSNSHREPP). PPR repeat units follow at residues 130 to 164 (LIPNAVAMLDGLCKDGLVQEAMKLFGLMRDKGTIP), 165 to 199 (EVVIYTAVVEAFCKAHKIEDAKRIFRKMQNNGIAP), 200 to 234 (NAFSYGVLVQGLYNCNMLDDAVAFCSEMLESGHSP), and 235 to 269 (NVPTFVELVDALCRVKGVEQAQSAIDTLNQKGFAV).

This sequence belongs to the PPR family. P subfamily.

This chain is Pentatricopeptide repeat-containing protein At4g38150, found in Arabidopsis thaliana (Mouse-ear cress).